The chain runs to 118 residues: Cysteine--tRNA ligase (118 aa).

Cys28 lines the Zn(2+) pocket. The 'HIGH' region motif lies at 30–40; sequence PTVYNYIHIGN.

Belongs to the class-I aminoacyl-tRNA synthetase family. In terms of assembly, monomer. It depends on Zn(2+) as a cofactor.

It is found in the cytoplasm. It carries out the reaction tRNA(Cys) + L-cysteine + ATP = L-cysteinyl-tRNA(Cys) + AMP + diphosphate. The chain is Cysteine--tRNA ligase (cysS) from Staphylococcus xylosus.